The chain runs to 493 residues: Cysteine--tRNA ligase (493 aa).

A Zn(2+)-binding site is contributed by Cys-41. A 'HIGH' region motif is present at residues 43–53; sequence PTVYNYPHIGN. The Zn(2+) site is built by Cys-231, His-256, and Glu-260. The short motif at 296–300 is the 'KMSKS' region element; the sequence is KMSKS. Lys-299 contacts ATP.

It belongs to the class-I aminoacyl-tRNA synthetase family. As to quaternary structure, monomer. Zn(2+) serves as cofactor.

The protein localises to the cytoplasm. The catalysed reaction is tRNA(Cys) + L-cysteine + ATP = L-cysteinyl-tRNA(Cys) + AMP + diphosphate. This Novosphingobium aromaticivorans (strain ATCC 700278 / DSM 12444 / CCUG 56034 / CIP 105152 / NBRC 16084 / F199) protein is Cysteine--tRNA ligase.